We begin with the raw amino-acid sequence, 96 residues long: Evasin P1078 (96 aa).

The signal sequence occupies residues 1–28; it reads MAFNTITFLQWAVFVAILFNMNLHSASA. 3 disulfides stabilise this stretch: cysteine 48–cysteine 67, cysteine 52–cysteine 69, and cysteine 63–cysteine 80. Asparagine 51 is a glycosylation site (N-linked (GlcNAc...) asparagine). N-linked (GlcNAc...) asparagine glycosylation occurs at asparagine 74.

It is found in the secreted. Its function is as follows. Salivary chemokine-binding protein which binds to host chemokines CXCL1, CXCL2, CXCL3, CXCL5, CXCL6, CXCL11 and CXCL13. The polypeptide is Evasin P1078 (Ixodes ricinus (Common tick)).